The following is a 446-amino-acid chain: Transcription factor SOX-8 (446 aa).

Disordered regions lie at residues methionine 1 to glutamate 58, alanine 155 to isoleucine 259, and histidine 318 to glycine 378. Positions glutamate 40–arginine 53 are enriched in gly residues. Residues glutamate 58–proline 100 are dimerization (DIM). The segment at residues valine 102 to lysine 170 is a DNA-binding region (HMG box). 3 stretches are compositionally biased toward basic and acidic residues: residues alanine 155 to tyrosine 171, aspartate 210 to glycine 219, and proline 242 to aspartate 253. The segment at proline 224–glutamate 298 is transactivation domain (TAM). The interval arginine 335–proline 446 is transactivation domain (TAC). Residues serine 362 to glycine 378 are compositionally biased toward low complexity. Residues proline 400 to phenylalanine 408 carry the 9aaTAD motif. Positions leucine 425 to proline 446 are disordered. The span at serine 430–proline 446 shows a compositional bias: polar residues.

The protein resides in the nucleus. Transcription factor that may play a role in central nervous system, limb and facial development. May be involved in male sex determination. Binds the consensus motif 5'-[AT][AT]CAA[AT]G-3'. This is Transcription factor SOX-8 from Homo sapiens (Human).